Consider the following 200-residue polypeptide: ATP synthase subunit b 2 (200 aa).

Residues 1–16 (MAEQNILTTPSPNADT) show a composition bias toward polar residues. Residues 1–38 (MAEQNILTTPSPNADTTIVPPGSPHTHTEQPSGGHGGA) are disordered. The chain crosses the membrane as a helical span at residues 46-66 (TFLAQLIWLALAFGLLYYLMS).

The protein belongs to the ATPase B chain family. In terms of assembly, F-type ATPases have 2 components, F(1) - the catalytic core - and F(0) - the membrane proton channel. F(1) has five subunits: alpha(3), beta(3), gamma(1), delta(1), epsilon(1). F(0) has three main subunits: a(1), b(2) and c(10-14). The alpha and beta chains form an alternating ring which encloses part of the gamma chain. F(1) is attached to F(0) by a central stalk formed by the gamma and epsilon chains, while a peripheral stalk is formed by the delta and b chains.

The protein localises to the cell inner membrane. F(1)F(0) ATP synthase produces ATP from ADP in the presence of a proton or sodium gradient. F-type ATPases consist of two structural domains, F(1) containing the extramembraneous catalytic core and F(0) containing the membrane proton channel, linked together by a central stalk and a peripheral stalk. During catalysis, ATP synthesis in the catalytic domain of F(1) is coupled via a rotary mechanism of the central stalk subunits to proton translocation. Its function is as follows. Component of the F(0) channel, it forms part of the peripheral stalk, linking F(1) to F(0). The b'-subunit is a diverged and duplicated form of b found in plants and photosynthetic bacteria. The chain is ATP synthase subunit b 2 (atpF2) from Methylorubrum populi (strain ATCC BAA-705 / NCIMB 13946 / BJ001) (Methylobacterium populi).